We begin with the raw amino-acid sequence, 282 residues long: 5'-adenylylsulfate reductase-like 2 (282 aa).

The N-terminal stretch at 1–19 (MRWWPALPLLLLAVAVAGA) is a signal peptide. In terms of domain architecture, Thioredoxin spans 20 to 159 (GDAAPVCTRP…LAAFYNDVSG (140 aa)). Residue N134 is glycosylated (N-linked (GlcNAc...) asparagine). A helical membrane pass occupies residues 205 to 225 (AASFVILRLLYLFYPKITAFV).

The protein localises to the membrane. This Oryza sativa subsp. japonica (Rice) protein is 5'-adenylylsulfate reductase-like 2 (APRL2).